The sequence spans 193 residues: Ribose 1,5-bisphosphate phosphokinase PhnN (193 aa).

Residue 9–16 (GPSGAGKD) participates in ATP binding.

This sequence belongs to the ribose 1,5-bisphosphokinase family.

The catalysed reaction is alpha-D-ribose 1,5-bisphosphate + ATP = 5-phospho-alpha-D-ribose 1-diphosphate + ADP. It functions in the pathway metabolic intermediate biosynthesis; 5-phospho-alpha-D-ribose 1-diphosphate biosynthesis; 5-phospho-alpha-D-ribose 1-diphosphate from D-ribose 5-phosphate (route II): step 3/3. Catalyzes the phosphorylation of ribose 1,5-bisphosphate to 5-phospho-D-ribosyl alpha-1-diphosphate (PRPP). In Yersinia pestis, this protein is Ribose 1,5-bisphosphate phosphokinase PhnN.